We begin with the raw amino-acid sequence, 123 residues long: Large ribosomal subunit protein bL12 (123 aa).

It belongs to the bacterial ribosomal protein bL12 family. In terms of assembly, homodimer. Part of the ribosomal stalk of the 50S ribosomal subunit. Forms a multimeric L10(L12)X complex, where L10 forms an elongated spine to which 2 to 4 L12 dimers bind in a sequential fashion. Binds GTP-bound translation factors.

Its function is as follows. Forms part of the ribosomal stalk which helps the ribosome interact with GTP-bound translation factors. Is thus essential for accurate translation. This chain is Large ribosomal subunit protein bL12, found in Mycoplasmopsis agalactiae (strain NCTC 10123 / CIP 59.7 / PG2) (Mycoplasma agalactiae).